The primary structure comprises 934 residues: Intimin (934 aa).

A signal peptide spans 1 to 39; the sequence is MITHGCYTRTRHKHKLKKTLIMLSAGLGLFFYVNQNSFA. Residues 40 to 153 form a peptidoglycan-binding region; it reads NGENYFKLGS…KLTKMSPDVT (114 aa). Residues 40–153 form a sufficient for homodimerization region; that stretch reads NGENYFKLGS…KLTKMSPDVT (114 aa). Positions 40–212 are required for periplasmic localization; that stretch reads NGENYFKLGS…LQAWLQHYGT (173 aa). The LysM domain occupies 63–112; the sequence is LFYTLKTGETVADLSKSQDINLSTIWSLNKHLYSSESEMMKAAPGQQIIL. The segment at 210–411 is inverse autotransporter; that stretch reads YGTAEVNLQS…LYSMQFRYQF (202 aa). The signature sequence for beta-barrel assembly machinery (BAM), which recognizes the unfolded beta-barrel in the periplasm stretch occupies residues 402 to 411; it reads LYSMQFRYQF. The tract at residues 437–449 is minimum linker residues necessary for formation of a heat-modifiable beta-barrel; the sequence is LVQRNNNIILEYK. Big-1 domains are found at residues 560-653 and 660-753; these read VTDF…VIFF and ITEI…VTFF. Positions 747–934 are intimin receptor Tir-binding; sequence ATEVTFFDEL…TPNVYAVCVE (188 aa). A BIG2 domain is found at 787–833; the sequence is ASGGDGTYSWYSENTSIATVDASGKVTLNGKGSVVIKATSGDKQTVS. Residues Cys858 and Cys932 are joined by a disulfide bond.

The protein belongs to the intimin/invasin family. Homodimer. Interacts with Tir.

Its subcellular location is the cell outer membrane. Functionally, an inverse autotransporter. Adhesin, which mediates attachment to the human intestine epithelial cells. Necessary for the production of attaching and effacing lesions on infected human tissue culture cells. Anchored to the outer membrane by binding to peptidoglycan (PGN) via its periplasmic domain, thus helping in receptor interactions during host invasion. PGN-binding may also aid in resisting mechanical and chemical stress during transit of the bacterium through the gastrointestinal tract of the host. The protein is Intimin of Escherichia coli O157:H7.